Here is a 693-residue protein sequence, read N- to C-terminus: Exocyst complex component 7 (693 aa).

Ser-236 carries the phosphoserine modification. The disordered stretch occupies residues 236–259; the sequence is SWGHEALRPRHSGRQTEPKKTTSA.

Belongs to the EXO70 family. The exocyst complex is composed of Sec3/Exoc1, Sec5/Exoc2, Sec6/Exoc3, Sec8/Exoc4, Sec10/Exoc5, Sec15/Exoc6, Exo70/Exoc7 and Exo84/Exoc8.

In terms of biological role, required for exocytosis. Thought to function in intracellular vesicle targeting and docking before SNARE complex formation. The chain is Exocyst complex component 7 from Drosophila melanogaster (Fruit fly).